Here is a 272-residue protein sequence, read N- to C-terminus: uncharacterized protein (272 aa).

This is an uncharacterized protein from Archaeoglobus fulgidus (strain ATCC 49558 / DSM 4304 / JCM 9628 / NBRC 100126 / VC-16).